Reading from the N-terminus, the 257-residue chain is NAD-capped RNA hydrolase NudC (257 aa).

Arginine 69 is a substrate binding site. Residues cysteine 98 and cysteine 101 each contribute to the Zn(2+) site. Glutamate 111 serves as a coordination point for substrate. Zn(2+)-binding residues include cysteine 116 and cysteine 119. Position 124 (tyrosine 124) interacts with substrate. The region spanning proline 125–threonine 248 is the Nudix hydrolase domain. Alanine 158, glutamate 174, and glutamate 178 together coordinate a divalent metal cation. The Nudix box signature appears at glycine 159–glycine 180. Glutamine 192–serine 199 is a substrate binding site. Glutamate 219 provides a ligand contact to a divalent metal cation. Alanine 241 lines the substrate pocket.

The protein belongs to the Nudix hydrolase family. NudC subfamily. Homodimer. Mg(2+) is required as a cofactor. It depends on Mn(2+) as a cofactor. The cofactor is Zn(2+).

The enzyme catalyses a 5'-end NAD(+)-phospho-ribonucleoside in mRNA + H2O = a 5'-end phospho-adenosine-phospho-ribonucleoside in mRNA + beta-nicotinamide D-ribonucleotide + 2 H(+). The catalysed reaction is NAD(+) + H2O = beta-nicotinamide D-ribonucleotide + AMP + 2 H(+). It catalyses the reaction NADH + H2O = reduced beta-nicotinamide D-ribonucleotide + AMP + 2 H(+). Functionally, mRNA decapping enzyme that specifically removes the nicotinamide adenine dinucleotide (NAD) cap from a subset of mRNAs by hydrolyzing the diphosphate linkage to produce nicotinamide mononucleotide (NMN) and 5' monophosphate mRNA. The NAD-cap is present at the 5'-end of some mRNAs and stabilizes RNA against 5'-processing. Has preference for mRNAs with a 5'-end purine. Catalyzes the hydrolysis of a broad range of dinucleotide pyrophosphates. The chain is NAD-capped RNA hydrolase NudC from Citrobacter koseri (strain ATCC BAA-895 / CDC 4225-83 / SGSC4696).